A 1135-amino-acid polypeptide reads, in one-letter code: Retinoblastoma-like protein 2 (1135 aa).

The segment at 1 to 43 (MASGGNQSPPPPPAAAASSEEEEEDGDAADRAQPAGSPSHQIQ) is disordered. The residue at position 410 (serine 410) is a Phosphoserine. The residue at position 414 (threonine 414) is a Phosphothreonine. The interval 414–613 (TPVSTAAHSL…DRIRDNENRV (200 aa)) is domain A. The interval 414–1021 (TPVSTAAHSL…QAFAMKYSQA (608 aa)) is pocket; binds E1A. An O-linked (GlcNAc) serine glycan is attached at serine 417. Residues 614–824 (PTCEEVMPPQ…PGQPLTSSSI (211 aa)) form a spacer region. The residue at position 636 (serine 636) is a Phosphoserine. Position 639 is a phosphothreonine (threonine 639). Serine 659, serine 669, serine 684, serine 942, serine 946, serine 960, serine 965, and serine 967 each carry phosphoserine. Composition is skewed to polar residues over residues 661–674 (TTLYDRYSSPTVST), 683–692 (DSPSEGSTSG), 935–950 (SGSSESRSHQNSPTEL), and 958–969 (DSSPVMRSNSTL). Disordered stretches follow at residues 661–698 (TTLYDRYSSPTVSTTRRRLFENDSPSEGSTSGRIPPQP) and 930–994 (GKRR…VEEE). The segment at 825–1021 (RPRKTSSLAL…QAFAMKYSQA (197 aa)) is domain B. A Phosphothreonine modification is found at threonine 968. Over residues 971–981 (VPQPSSAPPTP) the composition is skewed to pro residues. 2 positions are modified to phosphoserine: serine 975 and serine 976. The residue at position 980 (threonine 980) is a Phosphothreonine. Residues serine 1031, serine 1064, serine 1076, and serine 1108 each carry the phosphoserine modification.

This sequence belongs to the retinoblastoma protein (RB) family. Interacts with AATF and RINT1. Component of the DREAM complex (also named LINC complex) at least composed of E2F4, E2F5, LIN9, LIN37, LIN52, LIN54, MYBL1, MYBL2, RBL1, RBL2, RBBP4, TFDP1 and TFDP2. The complex exists in quiescent cells where it represses cell cycle-dependent genes. It dissociates in S phase when LIN9, LIN37, LIN52 and LIN54 form a subcomplex that binds to MYBL2. Interacts with USP4. Interacts with KMT5B, KMT5C and USP4. Interacts with PML. Interacts with RBBP9. Interacts with CD53. Post-translationally, during G0 and early G1 phase of the cell cycle, phosphorylated on Ser-636 and on 5 sites within the domain B. Phosphorylation on Ser-669 in G1 leads to its ubiquitin-dependent proteolysis.

The protein localises to the nucleus. Key regulator of entry into cell division. Directly involved in heterochromatin formation by maintaining overall chromatin structure and, in particular, that of constitutive heterochromatin by stabilizing histone methylation. Recruits and targets histone methyltransferases KMT5B and KMT5C, leading to epigenetic transcriptional repression. Controls histone H4 'Lys-20' trimethylation. Probably acts as a transcription repressor by recruiting chromatin-modifying enzymes to promoters. Potent inhibitor of E2F-mediated trans-activation, associates preferentially with E2F5. Binds to cyclins A and E. Binds to and may be involved in the transforming capacity of the adenovirus E1A protein. May act as a tumor suppressor. The polypeptide is Retinoblastoma-like protein 2 (Rbl2) (Mus musculus (Mouse)).